The following is a 438-amino-acid chain: sn-glycerol-3-phosphate-binding periplasmic protein UgpB (438 aa).

A signal peptide spans Met-1–Ala-23. Residues Tyr-65, Glu-89, Ser-144, Ser-270, Gly-307, Tyr-346, and Arg-397 each contribute to the sn-glycerol 3-phosphate site.

The protein belongs to the bacterial solute-binding protein 1 family. As to quaternary structure, the complex is composed of two ATP-binding proteins (UgpC), two transmembrane proteins (UgpA and UgpE) and a solute-binding protein (UgpB).

It localises to the periplasm. Part of the ABC transporter complex UgpBAEC involved in sn-glycerol-3-phosphate (G3P) import. Binds G3P. This is sn-glycerol-3-phosphate-binding periplasmic protein UgpB (ugpB) from Salmonella paratyphi A (strain ATCC 9150 / SARB42).